Here is a 203-residue protein sequence, read N- to C-terminus: Methyltransferase-like 26 (203 aa).

This sequence belongs to the UPF0585 family.

The polypeptide is Methyltransferase-like 26 (Xenopus tropicalis (Western clawed frog)).